The chain runs to 224 residues: MKFAVIQFPGSNCDIDLYEALHTVCGADVAYVPSKESSLDGFDAVMLPGGFSYGDYLRAGAIARFTNIMPAIVEMAKAGKPVFGTCNGFQILTEAGLLPGALKRNDSLKFVCKTVELEVANNDTIFTSEYQKGEKINLPIAHADGSFYADPETLQKIEDNGQVVFRYSKENPNGSLNNIAGITNERGNVLGMMPHPERAVEALLGNTDGLRLFKSILNHAEVKA.

Positions 2-224 (KFAVIQFPGS…SILNHAEVKA (223 aa)) constitute a Glutamine amidotransferase type-1 domain. Cys-86 functions as the Nucleophile in the catalytic mechanism. Catalysis depends on residues His-195 and Glu-197.

Part of the FGAM synthase complex composed of 1 PurL, 1 PurQ and 2 PurS subunits.

It localises to the cytoplasm. It catalyses the reaction N(2)-formyl-N(1)-(5-phospho-beta-D-ribosyl)glycinamide + L-glutamine + ATP + H2O = 2-formamido-N(1)-(5-O-phospho-beta-D-ribosyl)acetamidine + L-glutamate + ADP + phosphate + H(+). It carries out the reaction L-glutamine + H2O = L-glutamate + NH4(+). The protein operates within purine metabolism; IMP biosynthesis via de novo pathway; 5-amino-1-(5-phospho-D-ribosyl)imidazole from N(2)-formyl-N(1)-(5-phospho-D-ribosyl)glycinamide: step 1/2. Functionally, part of the phosphoribosylformylglycinamidine synthase complex involved in the purines biosynthetic pathway. Catalyzes the ATP-dependent conversion of formylglycinamide ribonucleotide (FGAR) and glutamine to yield formylglycinamidine ribonucleotide (FGAM) and glutamate. The FGAM synthase complex is composed of three subunits. PurQ produces an ammonia molecule by converting glutamine to glutamate. PurL transfers the ammonia molecule to FGAR to form FGAM in an ATP-dependent manner. PurS interacts with PurQ and PurL and is thought to assist in the transfer of the ammonia molecule from PurQ to PurL. This is Phosphoribosylformylglycinamidine synthase subunit PurQ from Lactobacillus delbrueckii subsp. bulgaricus (strain ATCC 11842 / DSM 20081 / BCRC 10696 / JCM 1002 / NBRC 13953 / NCIMB 11778 / NCTC 12712 / WDCM 00102 / Lb 14).